A 562-amino-acid polypeptide reads, in one-letter code: Putative transport protein ECA2683 (562 aa).

6 consecutive transmembrane segments (helical) span residues 8-28, 32-52, 66-86, 93-113, 116-136, and 158-178; these read LLNG…LCLG, LGPV…LLGQ, FMLF…SIFF, FMLA…LGKL, WGIG…PVLV, and HLSL…IFGA. RCK C-terminal domains are found at residues 202-288 and 290-373; these read LDVD…NFRD and KEVF…RIGF. The next 5 membrane-spanning stretches (helical) occupy residues 383-403, 406-426, 447-467, 478-498, and 537-557; these read LLAF…TIQF, FTFG…LGFL, FGLM…INSS, SGLI…AYVL, and GTYA…VVIW.

It belongs to the AAE transporter (TC 2.A.81) family. YbjL subfamily.

It is found in the cell membrane. This is Putative transport protein ECA2683 from Pectobacterium atrosepticum (strain SCRI 1043 / ATCC BAA-672) (Erwinia carotovora subsp. atroseptica).